The primary structure comprises 36 residues: Photosystem I reaction center subunit VIII (36 aa).

Residues 8 to 28 form a helical membrane-spanning segment; it reads SIFVPLVGLVFPAIAIASLFL.

This sequence belongs to the PsaI family.

It is found in the plastid. The protein localises to the chloroplast thylakoid membrane. Its function is as follows. May help in the organization of the PsaL subunit. This chain is Photosystem I reaction center subunit VIII, found in Jasminum nudiflorum (Winter jasmine).